The sequence spans 135 residues: Ribosome-binding factor A (135 aa).

The protein belongs to the RbfA family. As to quaternary structure, monomer. Binds 30S ribosomal subunits, but not 50S ribosomal subunits or 70S ribosomes.

It is found in the cytoplasm. Its function is as follows. One of several proteins that assist in the late maturation steps of the functional core of the 30S ribosomal subunit. Associates with free 30S ribosomal subunits (but not with 30S subunits that are part of 70S ribosomes or polysomes). Required for efficient processing of 16S rRNA. May interact with the 5'-terminal helix region of 16S rRNA. This is Ribosome-binding factor A from Rhizobium meliloti (strain 1021) (Ensifer meliloti).